The primary structure comprises 205 residues: Probable GTP-binding protein EngB (205 aa).

One can recognise an EngB-type G domain in the interval 25–199 (NGIEIAFIGY…KLSLNSSYKK (175 aa)). GTP contacts are provided by residues 33-40 (GYSNTGKS), 60-64 (GRTQL), 78-81 (DLPG), 145-148 (TKCD), and 178-180 (FSS). Mg(2+)-binding residues include serine 40 and threonine 62.

Belongs to the TRAFAC class TrmE-Era-EngA-EngB-Septin-like GTPase superfamily. EngB GTPase family. Mg(2+) is required as a cofactor.

Functionally, necessary for normal cell division and for the maintenance of normal septation. The protein is Probable GTP-binding protein EngB of Buchnera aphidicola subsp. Acyrthosiphon pisum (strain 5A).